Reading from the N-terminus, the 270-residue chain is Imidazole glycerol phosphate synthase subunit HisF (270 aa).

Residues Asp11 and Asp135 contribute to the active site.

This sequence belongs to the HisA/HisF family. In terms of assembly, heterodimer of HisH and HisF.

Its subcellular location is the cytoplasm. The enzyme catalyses 5-[(5-phospho-1-deoxy-D-ribulos-1-ylimino)methylamino]-1-(5-phospho-beta-D-ribosyl)imidazole-4-carboxamide + L-glutamine = D-erythro-1-(imidazol-4-yl)glycerol 3-phosphate + 5-amino-1-(5-phospho-beta-D-ribosyl)imidazole-4-carboxamide + L-glutamate + H(+). It participates in amino-acid biosynthesis; L-histidine biosynthesis; L-histidine from 5-phospho-alpha-D-ribose 1-diphosphate: step 5/9. IGPS catalyzes the conversion of PRFAR and glutamine to IGP, AICAR and glutamate. The HisF subunit catalyzes the cyclization activity that produces IGP and AICAR from PRFAR using the ammonia provided by the HisH subunit. This is Imidazole glycerol phosphate synthase subunit HisF from Haloquadratum walsbyi (strain DSM 16790 / HBSQ001).